Reading from the N-terminus, the 376-residue chain is Nuclear egress protein 1 (376 aa).

Phosphoserine is present on Ser-19. A disordered region spans residues 22–57 (RKRRQRELASKVASTVNGATSANNHGEPPSPADARP). The segment covering 33–45 (VASTVNGATSANN) has biased composition (polar residues). Residues 106 to 211 (CLDISPYGNE…HVIFENSDVH (106 aa)) form a CCCH-type zinc finger. A disordered region spans residues 316–376 (VVSTNGCGPS…PLFLNSIRAP (61 aa)). Over residues 317-332 (VSTNGCGPSSSSQSTP) the composition is skewed to polar residues.

It belongs to the herpesviridae NEC1 protein family. As to quaternary structure, forms a heterohexameric complex with NEC2. Interacts with capsid vertex specific component 2/CVC2; this interaction directs the capsid to the host inner nuclear membrane to initiate budding. Phosphorylated at serine residues in the N-terminus. This phosphorylation regulates the localization within the inner nuclear membrane. Phosphorylation by viral kinase UL97 at Ser-19 plays an important role for correct viral nuclear egress complex (NEC) localization.

Its subcellular location is the host nucleus inner membrane. In terms of biological role, plays an essential role in virion nuclear egress, the first step of virion release from infected cell. Within the host nucleus, NEC1 interacts with the newly formed capsid through the vertexes and directs it to the inner nuclear membrane by associating with NEC2. Induces the budding of the capsid at the inner nuclear membrane as well as its envelopment into the perinuclear space. There, the NEC1/NEC2 complex promotes the fusion of the enveloped capsid with the outer nuclear membrane and the subsequent release of the viral capsid into the cytoplasm where it will reach the secondary budding sites in the host Golgi or trans-Golgi network. The sequence is that of Nuclear egress protein 1 from Homo sapiens (Human).